The primary structure comprises 589 residues: GTPase LSG1-2 (589 aa).

The disordered stretch occupies residues 1–26 (MGKSEKTSLGRSLVKHHNHMIQESKD). The region spanning 158–366 (WRQLWRVLER…LCDCPGLVFP (209 aa)) is the CP-type G domain. The DARXP motif motif lies at 176–180 (DARDP). Residues 206–209 (NKAD) form a G4 region. 206–209 (NKAD) provides a ligand contact to GTP. Positions 237–239 (AAT) are G5. A G1 region spans residues 315–322 (GYPNVGKS). 318–323 (NVGKSS) serves as a coordination point for GTP. Residues 341–345 (GKTKH) are G2. Positions 359-362 (DCPG) are G3. Residue Gly362 participates in GTP binding. A compositionally biased stretch (acidic residues) spans 495 to 509 (GSESDDSAVGDETEN). Disordered stretches follow at residues 495 to 515 (GSES…VPGI) and 534 to 589 (SKKV…LTMR). The Nuclear localization signal signature appears at 534–541 (SKKVTAKK). Residues 534-558 (SKKVTAKKQTASHKQHKKPQRKKDR) show a composition bias toward basic residues. Residues 580–589 (PANTGPLTMR) show a composition bias toward polar residues.

The protein belongs to the TRAFAC class YlqF/YawG GTPase family. As to expression, ubiquitous, with the highest expression in reproductive and strongly dividing tissues.

It is found in the cytoplasm. The protein localises to the nucleus. In terms of biological role, GTPase involved in ribosome biogenesis. Binds to 23S rRNA and associates with 60S pre-ribosomes. Involved in early cotyledon and leaf development. This is GTPase LSG1-2 from Arabidopsis thaliana (Mouse-ear cress).